Consider the following 1390-residue polypeptide: DNA-directed RNA polymerase subunit beta (1390 aa).

The protein belongs to the RNA polymerase beta chain family. In terms of assembly, the RNAP catalytic core consists of 2 alpha, 1 beta, 1 beta' and 1 omega subunit. When a sigma factor is associated with the core the holoenzyme is formed, which can initiate transcription.

It carries out the reaction RNA(n) + a ribonucleoside 5'-triphosphate = RNA(n+1) + diphosphate. Functionally, DNA-dependent RNA polymerase catalyzes the transcription of DNA into RNA using the four ribonucleoside triphosphates as substrates. The chain is DNA-directed RNA polymerase subunit beta from Rhodopseudomonas palustris (strain HaA2).